A 241-amino-acid polypeptide reads, in one-letter code: Superantigen-like protein 13 (241 aa).

Residues 1–26 (MNNNITKKIILSTTLLLLGTASTQFP) form the signal peptide.

The protein belongs to the staphylococcal/streptococcal toxin family. As to quaternary structure, interacts with host FPR2; this interaction promotes neutrophil chemotaxis.

Its function is as follows. Acts as a pathogen alarming molecule by acting on host neutrophil chemotactic factors FPR2. Plays a role of chemoattractant and induces degranulation and oxidative burst in neutrophils. The sequence is that of Superantigen-like protein 13 from Staphylococcus aureus (strain Newman).